The primary structure comprises 78 residues: Omega-conotoxin-like SO-4 (78 aa).

A signal peptide spans 1–22; that stretch reads MKLTCMVIVAVLLLTACQLITA. Positions 23-42 are excised as a propeptide; sequence DDSRGTQKHRSLRSTTKVSK. Intrachain disulfides connect C46–C62, C53–C65, and C61–C72.

It belongs to the conotoxin O1 superfamily. As to expression, expressed by the venom duct.

It localises to the secreted. In terms of biological role, omega-conotoxins act at presynaptic membranes, they bind and block voltage-gated calcium channels (Cav). The polypeptide is Omega-conotoxin-like SO-4 (SO4) (Conus striatus (Striated cone)).